The sequence spans 121 residues: Large ribosomal subunit protein uL18 (121 aa).

This sequence belongs to the universal ribosomal protein uL18 family. As to quaternary structure, part of the 50S ribosomal subunit; part of the 5S rRNA/L5/L18/L25 subcomplex. Contacts the 5S and 23S rRNAs.

Functionally, this is one of the proteins that bind and probably mediate the attachment of the 5S RNA into the large ribosomal subunit, where it forms part of the central protuberance. The sequence is that of Large ribosomal subunit protein uL18 from Geobacter metallireducens (strain ATCC 53774 / DSM 7210 / GS-15).